The sequence spans 414 residues: MANSC domain-containing protein 1 (414 aa).

Positions 1–24 are cleaved as a signal peptide; the sequence is MLFRGTSLAYSLLVISFLTPRSSA. Topologically, residues 25-369 are extracellular; it reads GQNCLTKSLE…HGLSFEKWLL (345 aa). The MANSC domain occupies 32 to 116; that stretch reads SLEDVVIDIQ…LKPAKGLVTY (85 aa). N-linked (GlcNAc...) asparagine glycans are attached at residues N128, N234, and N335. The tract at residues 311–339 is disordered; sequence FQGGSTLTSDPRHGKSSTSESSITNKTAS. The segment covering 326–338 has biased composition (polar residues); the sequence is SSTSESSITNKTA. Residues 370–392 traverse the membrane as a helical segment; the sequence is IGTLLCGVLFLVIGLVLLGRMLV. Residues 393 to 414 lie on the Cytoplasmic side of the membrane; that stretch reads EALRRKRYSRLDYLINGIYVDI.

The protein resides in the membrane. This chain is MANSC domain-containing protein 1 (Mansc1), found in Mus musculus (Mouse).